The chain runs to 147 residues: Large ribosomal subunit protein bL9 (147 aa).

It belongs to the bacterial ribosomal protein bL9 family.

Binds to the 23S rRNA. The sequence is that of Large ribosomal subunit protein bL9 from Cytophaga hutchinsonii (strain ATCC 33406 / DSM 1761 / CIP 103989 / NBRC 15051 / NCIMB 9469 / D465).